The following is a 564-amino-acid chain: Eukaryotic translation initiation factor 3 subunit L (564 aa).

Residue Ser2 is modified to N-acetylserine. Position 21 is a phosphoserine (Ser21). Positions 331–537 (DAIRVFANIL…IHIADTKVAR (207 aa)) constitute a PCI domain. N6-acetyllysine is present on residues Lys465 and Lys549.

It belongs to the eIF-3 subunit L family. In terms of assembly, component of the eukaryotic translation initiation factor 3 (eIF-3) complex, which is composed of 13 subunits: EIF3A, EIF3B, EIF3C, EIF3D, EIF3E, EIF3F, EIF3G, EIF3H, EIF3I, EIF3J, EIF3K, EIF3L and EIF3M. The eIF-3 complex appears to include 3 stable modules: module A is composed of EIF3A, EIF3B, EIF3G and EIF3I; module B is composed of EIF3F, EIF3H, and EIF3M; and module C is composed of EIF3C, EIF3D, EIF3E, EIF3K and EIF3L. EIF3C of module C binds EIF3B of module A and EIF3H of module B, thereby linking the three modules. EIF3J is a labile subunit that binds to the eIF-3 complex via EIF3B. The eIF-3 complex interacts with RPS6KB1 under conditions of nutrient depletion. Mitogenic stimulation leads to binding and activation of a complex composed of MTOR and RPTOR, leading to phosphorylation and release of RPS6KB1 and binding of EIF4B to eIF-3. Interacts with RRN3.

It localises to the cytoplasm. Its function is as follows. Component of the eukaryotic translation initiation factor 3 (eIF-3) complex, which is required for several steps in the initiation of protein synthesis. The eIF-3 complex associates with the 40S ribosome and facilitates the recruitment of eIF-1, eIF-1A, eIF-2:GTP:methionyl-tRNAi and eIF-5 to form the 43S pre-initiation complex (43S PIC). The eIF-3 complex stimulates mRNA recruitment to the 43S PIC and scanning of the mRNA for AUG recognition. The eIF-3 complex is also required for disassembly and recycling of post-termination ribosomal complexes and subsequently prevents premature joining of the 40S and 60S ribosomal subunits prior to initiation. The eIF-3 complex specifically targets and initiates translation of a subset of mRNAs involved in cell proliferation, including cell cycling, differentiation and apoptosis, and uses different modes of RNA stem-loop binding to exert either translational activation or repression. In Pan troglodytes (Chimpanzee), this protein is Eukaryotic translation initiation factor 3 subunit L.